Here is a 156-residue protein sequence, read N- to C-terminus: Arginine repressor (156 aa).

It belongs to the ArgR family.

The protein resides in the cytoplasm. It participates in amino-acid biosynthesis; L-arginine biosynthesis [regulation]. Functionally, regulates arginine biosynthesis genes. In Salmonella paratyphi C (strain RKS4594), this protein is Arginine repressor.